Reading from the N-terminus, the 83-residue chain is MSSGGLLLLLGLLTLWAELTPVSSKDRPDFCHLPADSGSCKGNFQAFYYHPVHRTCLEFIYGGCEGNANNFKTMDECKRTCAA.

An N-terminal signal peptide occupies residues 1–24 (MSSGGLLLLLGLLTLWAELTPVSS). Residues 31 to 81 (CHLPADSGSCKGNFQAFYYHPVHRTCLEFIYGGCEGNANNFKTMDECKRTC) form the BPTI/Kunitz inhibitor domain. 3 cysteine pairs are disulfide-bonded: cysteine 31/cysteine 81, cysteine 40/cysteine 64, and cysteine 56/cysteine 77.

This sequence belongs to the venom Kunitz-type family. In terms of tissue distribution, expressed by the venom gland.

It is found in the secreted. Functionally, serine protease inhibitor. The chain is Kunitz-type serine protease inhibitor 161 from Drysdalia coronoides (White-lipped snake).